Consider the following 407-residue polypeptide: Arrestin domain-containing protein 2 (407 aa).

Belongs to the arrestin family. As to quaternary structure, interacts with WWP1 (via WW domains).

This chain is Arrestin domain-containing protein 2 (ARRDC2), found in Homo sapiens (Human).